A 220-amino-acid chain; its full sequence is Charged multivesicular body protein 5 (220 aa).

A compositionally biased stretch (basic residues) spans 1-10 (MNRIFGRGKP). Residues 1-27 (MNRIFGRGKPKGPPPNLTDCISGVDSR) are disordered. Coiled coils occupy residues 25-55 (DSRA…MRDG) and 121-153 (KNVK…SRSY). Positions 178–206 (DDNSYLDEASSAPAIPEGAPGDRTTNRDG) are disordered.

Belongs to the SNF7 family. Probable peripherally associated component of the endosomal sorting required for transport complex III (ESCRT-III).

The protein resides in the cytoplasm. The protein localises to the cytosol. Its subcellular location is the endosome membrane. In terms of biological role, probable peripherally associated component of the endosomal sorting required for transport complex III (ESCRT-III) which is involved in multivesicular bodies (MVBs) formation and sorting of endosomal cargo proteins into MVBs. MVBs contain intraluminal vesicles (ILVs) that are generated by invagination and scission from the limiting membrane of the endosome and mostly are delivered to lysosomes enabling degradation of membrane proteins, such as stimulated growth factor receptors, lysosomal enzymes and lipids. This Danio rerio (Zebrafish) protein is Charged multivesicular body protein 5 (chmp5).